The chain runs to 123 residues: Beta-defensin 126 (123 aa).

The signal sequence occupies residues 1 to 20 (MKSLLFTLAVFMLLAQLVSG). Residues 21–63 (NLYVKRCLNDIGICKKTCKPEEVRSEHGWVMCGKRKACCVPAD) form an in vitro binds to LPS, mediates antimicrobial activity and inhibits LPS-mediated inflammation region. 3 disulfide bridges follow: Cys27/Cys58, Cys34/Cys52, and Cys38/Cys59.

This sequence belongs to the beta-defensin family. Homodimer or homooligomer; disulfide-linked. Post-translationally, O-glycosylated; glycans contain sialic acids alpha(2,3)-linked to galactose and N-acetylgalactosamine. The C-terminal O-glycosylation contributes substantially to the sperm glyocalyx. High-level and epididymis-specific expression. Detected in epithelial cells lining the efferent ductules, initial segment, and cauda regions of the epididymis, but not on spermatozoa.

The protein resides in the secreted. In terms of biological role, highly glycosylated atypical beta-defensin involved in several aspects of sperm function. Facilitates sperm transport in the female reproductive tract and contributes to sperm protection against immunodetection; both functions are probably implicating the negative surface charge provided by its O-linked oligosaccharides in the sperm glycocalyx. Involved in binding of sperm to oviductal epithelial cells to form a sperm reservoir until ovulation. Release from the sperm surface during capacitation and ovaluation by an elevation of oviductal fluid pH is unmasking other surface components and allows sperm to penetrate the cumulus matrix and bind to the zona pellucida of the oocyte. In vitro has antimicrobial activity and may inhibit LPS-mediated inflammation. The protein is Beta-defensin 126 (DEFB126) of Macaca fascicularis (Crab-eating macaque).